Reading from the N-terminus, the 480-residue chain is Porphobilinogen deaminase, chloroplastic (480 aa).

Residues 1-139 (MYCGRYETIG…VSGGRIWSLA (139 aa)) constitute a chloroplast transit peptide. Residue cysteine 395 is modified to S-(dipyrrolylmethanemethyl)cysteine.

It belongs to the HMBS family. The cofactor is dipyrromethane.

The protein localises to the plastid. Its subcellular location is the chloroplast. It catalyses the reaction 4 porphobilinogen + H2O = hydroxymethylbilane + 4 NH4(+). It functions in the pathway porphyrin-containing compound metabolism; protoporphyrin-IX biosynthesis; coproporphyrinogen-III from 5-aminolevulinate: step 2/4. Its pathway is porphyrin-containing compound metabolism; chlorophyll biosynthesis. In terms of biological role, tetrapolymerization of the monopyrrole PBG into the hydroxymethylbilane pre-uroporphyrinogen in several discrete steps. This chain is Porphobilinogen deaminase, chloroplastic, found in Euglena gracilis.